Reading from the N-terminus, the 3080-residue chain is Protein PIEZO homolog (3080 aa).

6 consecutive transmembrane segments (helical) span residues 28–48, 57–77, 86–106, 113–133, 204–224, and 232–252; these read YIYFIFFLLSILCLPHKSLIL, PIITLVLSMFSLILQLLVNVV, LSVNILTAFGFYKYNSFWIVF, VIVFVISLFTIILWFKNLVYP, YPSIINVIYFVFTILIILLLA, and VMLKCYPILLITSLCHLLFVY. N276 carries an N-linked (GlcNAc...) asparagine glycan. The chain crosses the membrane as a helical span at residues 285-305; the sequence is WPLVIGYITVLLLYISTCILF. 2 N-linked (GlcNAc...) asparagine glycosylation sites follow: N312 and N339. 2 helical membrane-spanning segments follow: residues 362 to 382 and 396 to 416; these read ILVVCFFLTASVASAILLASG and VIYIILLYFLVFISAQYIFNI. Residue N434 is glycosylated (N-linked (GlcNAc...) asparagine). Residues 438–458 form a helical membrane-spanning segment; that stretch reads WLYIGVQIVVSLTLSLYCFYS. Positions 469–548 are disordered; that stretch reads KKDQQSQQSQ…GGGIIRPRKP (80 aa). Residues 473–505 are compositionally biased toward low complexity; the sequence is QSQQSQPQPQQQQQQQQSSQNNQIQQSPLQYQQ. Residues 512-532 show a composition bias toward polar residues; the sequence is ISNKSLPSSPMSTKSTTVHIQ. Residues N514, N567, and N606 are each glycosylated (N-linked (GlcNAc...) asparagine). 3 consecutive transmembrane segments (helical) span residues 672–692, 700–720, and 740–760; these read GLTSINLLNAGYMLFFIVFVI, FWMCLIIYAQMVLLTLYIWQL, and YGSPLWVGLIWHIIIITFSII. N-linked (GlcNAc...) asparagine glycosylation is present at N795. 3 consecutive transmembrane segments (helical) span residues 827 to 847, 849 to 869, and 872 to 892; these read FCYLVIVIVSIFTKISLINIV, MATVFLCLLIHHISANGSIHI, and FWIIIILSQGVVLVARYIMQF. N-linked (GlcNAc...) asparagine glycosylation is present at N918. Residues 928-948 traverse the membrane as a helical segment; that stretch reads LFGCSSILVVCVFQLTVFFSI. The N-linked (GlcNAc...) asparagine glycan is linked to N992. The next 2 membrane-spanning stretches (helical) occupy residues 1036–1056 and 1067–1087; these read FAISIAEYNFFNFIYLIMIVI and IGSFLLFYSQLWVLTQLAALL. N1109 carries N-linked (GlcNAc...) asparagine glycosylation. The disordered stretch occupies residues 1158-1185; the sequence is QQQRKLEEHEEEYEEEEDQFGNKKNNDK. Positions 1166–1176 are enriched in acidic residues; that stretch reads HEEEYEEEEDQ. N1191, N1240, and N1251 each carry an N-linked (GlcNAc...) asparagine glycan. The disordered stretch occupies residues 1199 to 1253; it reads DDGNNNNNNNNNNNNNNNNNNNNNNNNNNNNNNNNNNNNNNNQSNNENNENNNNS. Low complexity predominate over residues 1202–1252; sequence NNNNNNNNNNNNNNNNNNNNNNNNNNNNNNNNNNNNNNNQSNNENNENNNN. Transmembrane regions (helical) follow at residues 1281 to 1301, 1316 to 1336, and 1360 to 1380; these read VLAFALFWRLNILGMIYLIII, IYVSALLAPTILIQYLLILVV, and LLLLSIPDRYVLVIDFLVLFF. N-linked (GlcNAc...) asparagine glycans are attached at residues N1424 and N1440. 2 helical membrane passes run 1472-1492 and 1519-1539; these read VILIVIFLAGTAECDILSCFY and IYNWLVLMAQIIFQVAVILYF. Residues N1559 and N1589 are each glycosylated (N-linked (GlcNAc...) asparagine). Residues 1619–1639 form a helical membrane-spanning segment; that stretch reads IETGPLSISTISDVIIMVLLA. Residues 1704–1714 are compositionally biased toward basic residues; sequence RINRRKNRHNH. Residues 1704–1812 form a disordered region; it reads RINRRKNRHN…NPLSNSSSTV (109 aa). The segment covering 1715 to 1742 has biased composition (low complexity); the sequence is YYNNNPNNNYNNNNNNNNSNSSNSNNNN. N-linked (GlcNAc...) asparagine glycans are attached at residues N1731, N1734, N1763, N1768, N1771, N1779, N1807, and N1864. Residues 1762–1782 are compositionally biased toward polar residues; sequence KNTTNQNATNSTYSPFANSTM. Low complexity predominate over residues 1789–1812; the sequence is NNNNNNNNNNNFNNNPLSNSSSTV. Disordered stretches follow at residues 1873-1899 and 1958-2032; these read LQQEQQQQQEQQQQLNPQQQQSQSSKE and SQLL…TSSS. The span at 1958–2021 shows a compositional bias: low complexity; sequence SQLLQQQQQQ…NNNNNNNNNN (64 aa). An N-linked (GlcNAc...) asparagine glycan is attached at N2027. Transmembrane regions (helical) follow at residues 2078 to 2098 and 2112 to 2132; these read IANGVFYNSIISLVYLLAVFL and FWRFMIGYSSLIICLKYVFQI. N-linked (GlcNAc...) asparagine glycosylation occurs at N2148. The chain crosses the membrane as a helical span at residues 2199–2219; sequence VFGLYIIDGHFISGAFWDLAI. The interval 2277–2367 is disordered; it reads LNNSPISLNS…NNNNNNNNNN (91 aa). Residue N2285 is glycosylated (N-linked (GlcNAc...) asparagine). The segment covering 2288-2367 has biased composition (low complexity); sequence NNNNNNNNNN…NNNNNNNNNN (80 aa). 2 consecutive transmembrane segments (helical) span residues 2427-2447 and 2457-2477; these read IIIYPFKWLFVSIIEYVWLAI and YYMPLLFTDFACLFFLVIFPQ. N-linked (GlcNAc...) asparagine glycosylation occurs at N2478. The next 4 membrane-spanning stretches (helical) occupy residues 2500–2520, 2530–2550, 2553–2573, and 2671–2691; these read YIVILLAQFGVIILDRIIYLY, QIVLTVLYHVFLFFYFPDLIV, FSFGYTWPLVVFYLMKCIYLY, and FVTGVTFFIGLVILLWFPLII. N2762, N2790, N2837, N2840, N2848, N2858, N2908, N2913, and N2935 each carry an N-linked (GlcNAc...) asparagine glycan. The segment at 2835-2863 is disordered; the sequence is QSNNSNNSNNPNENSSSGSDDNNNNSNNN. Over residues 2836–2863 the composition is skewed to low complexity; sequence SNNSNNSNNPNENSSSGSDDNNNNSNNN. The helical transmembrane segment at 2955–2975 threads the bilayer; it reads ITSTLVSAGIIGLYVSVVLSV. The disordered stretch occupies residues 3054–3080; the sequence is PTINSTLNNQNNQNNNNNNNNNHEKIN. N-linked (GlcNAc...) asparagine glycosylation occurs at N3057. Over residues 3061–3074 the composition is skewed to low complexity; sequence NNQNNQNNNNNNNN.

Belongs to the PIEZO (TC 1.A.75) family.

The protein resides in the membrane. This chain is Protein PIEZO homolog, found in Dictyostelium discoideum (Social amoeba).